Here is a 953-residue protein sequence, read N- to C-terminus: Isoleucine--tRNA ligase (953 aa).

The 'HIGH' region motif lies at 58 to 68 (PYANGSIHIGH). Glutamate 577 contacts L-isoleucyl-5'-AMP. The 'KMSKS' region motif lies at 618 to 622 (KMSKS). ATP is bound at residue lysine 621. Residues cysteine 916, cysteine 919, cysteine 936, and cysteine 939 each contribute to the Zn(2+) site.

The protein belongs to the class-I aminoacyl-tRNA synthetase family. IleS type 1 subfamily. As to quaternary structure, monomer. Requires Zn(2+) as cofactor.

The protein localises to the cytoplasm. The enzyme catalyses tRNA(Ile) + L-isoleucine + ATP = L-isoleucyl-tRNA(Ile) + AMP + diphosphate. Its function is as follows. Catalyzes the attachment of isoleucine to tRNA(Ile). As IleRS can inadvertently accommodate and process structurally similar amino acids such as valine, to avoid such errors it has two additional distinct tRNA(Ile)-dependent editing activities. One activity is designated as 'pretransfer' editing and involves the hydrolysis of activated Val-AMP. The other activity is designated 'posttransfer' editing and involves deacylation of mischarged Val-tRNA(Ile). This is Isoleucine--tRNA ligase from Aeromonas salmonicida (strain A449).